Here is a 156-residue protein sequence, read N- to C-terminus: D-aminoacyl-tRNA deacylase (156 aa).

A Gly-cisPro motif, important for rejection of L-amino acids motif is present at residues 137-138 (GP).

Belongs to the DTD family. As to quaternary structure, homodimer.

It localises to the cytoplasm. The enzyme catalyses glycyl-tRNA(Ala) + H2O = tRNA(Ala) + glycine + H(+). It carries out the reaction a D-aminoacyl-tRNA + H2O = a tRNA + a D-alpha-amino acid + H(+). Its function is as follows. An aminoacyl-tRNA editing enzyme that deacylates mischarged D-aminoacyl-tRNAs. Also deacylates mischarged glycyl-tRNA(Ala), protecting cells against glycine mischarging by AlaRS. Acts via tRNA-based rather than protein-based catalysis; rejects L-amino acids rather than detecting D-amino acids in the active site. By recycling D-aminoacyl-tRNA to D-amino acids and free tRNA molecules, this enzyme counteracts the toxicity associated with the formation of D-aminoacyl-tRNA entities in vivo and helps enforce protein L-homochirality. The polypeptide is D-aminoacyl-tRNA deacylase (Ruegeria sp. (strain TM1040) (Silicibacter sp.)).